Here is a 321-residue protein sequence, read N- to C-terminus: Phospholipid phosphatase-related protein type 5 (321 aa).

Helical transmembrane passes span 10–30 (SSML…AYYF), 62–82 (AVPP…VIIV), 122–142 (FLGI…AGQV), 196–213 (AALS…ITNT), 225–245 (VLCL…VAEY), and 252–272 (VIAG…CVVN).

The protein belongs to the PA-phosphatase related phosphoesterase family. In terms of tissue distribution, isoform 1 is expressed in brain, lung, kidney and colon. Isoform 2 is expressed in placenta, skeletal muscle and kidney.

Its subcellular location is the cell membrane. In terms of biological role, induces filopodia formation and promotes neurite growth in a CDC42-independent manner; impedes neurite growth inhibitory-mediated axonal retraction. The sequence is that of Phospholipid phosphatase-related protein type 5 from Homo sapiens (Human).